Consider the following 123-residue polypeptide: Cliotide T4 (123 aa).

The signal sequence occupies residues 1–28 (MASLRIAPLALFFFLAASVMFTVEKTEA). The segment at residues 29-58 (GIPCGESCVFIPCITAAIGCSCKSKVCYRN) is a cross-link (cyclopeptide (Gly-Asn)). Intrachain disulfides connect C32–C48, C36–C50, and C41–C55. The propeptide at 59–123 (HVIAAEAKTM…KDHLKMSITN (65 aa)) is removed in mature form.

In terms of processing, contains 3 disulfide bonds. Post-translationally, this is a cyclic peptide. Expressed in flower, stem, shoot, root, leaf, seed, pod and nodule (at protein level).

Its function is as follows. Probably participates in a plant defense mechanism. Active against Gram-negative bacteria E.coli ATCC 700926 (MIC=1.0 uM), K.pneumoniae ATTC 13883 (MIC=5.5 uM) and P.aeruginosa ATCC 39018 (MIC=7.5 uM). Has hemolytic and cytotoxic activity. This chain is Cliotide T4, found in Clitoria ternatea (Butterfly pea).